Here is a 127-residue protein sequence, read N- to C-terminus: DNA-directed RNA polymerases I, II, and III subunit RPABC2 (127 aa).

Positions methionine 1–glycine 32 are enriched in acidic residues. The tract at residues methionine 1–isoleucine 52 is disordered. At serine 2 the chain carries N-acetylserine. At serine 2 the chain carries Phosphoserine; by CK2.

It belongs to the archaeal Rpo6/eukaryotic RPB6 RNA polymerase subunit family. As to quaternary structure, component of the RNA polymerase I (Pol I), RNA polymerase II (Pol II) and RNA polymerase III (Pol III) complexes consisting of at least 13, 12 and 17 subunits, respectively. Pol I complex consists of a ten-subunit catalytic core composed of POLR1A/RPA1, POLR1B/RPA2, POLR1C/RPAC1, POLR1D/RPAC2, POLR1H/RPA12, POLR2E/RPABC1, POLR2F/RPABC2, POLR2H/RPABC3, POLR2K/RPABC4 and POLR2L/RPABC5; a mobile stalk subunit POLR1F/RPA43 protruding from the core and additional subunits homologous to general transcription factors POLR1E/RPA49 and POLR1G/RPA34. Part of Pol I pre-initiation complex (PIC), in which Pol I core assembles with RRN3 and promoter-bound UTBF and SL1/TIF-IB complex. Pol II complex contains a ten-subunit catalytic core composed of POLR2A/RPB1, POLR2B/RPB2, POLR2C/RPB3, POLR2I/RPB9, POLR2J/RPB11, POLR2E/RPABC1, POLR2F/RPABC2, POLR2H/RPABC3, POLR2K/RPABC4 and POLR2L/RPABC5 and a mobile stalk composed of two subunits POLR2D/RPB4 and POLR2G/RPB7. Part of Pol II(G) complex, in which Pol II core associates with an additional subunit POLR2M; unlike conventional Pol II, Pol II(G) functions as a transcriptional repressor. Part of TBP-based Pol II pre-initiation complex (PIC), in which Pol II core assembles with general transcription factors and other specific initiation factors including GTF2E1, GTF2E2, GTF2F1, GTF2F2, TCEA1, ERCC2, ERCC3, GTF2H2, GTF2H3, GTF2H4, GTF2H5, GTF2A1, GTF2A2, GTF2B and TBP; this large multi-subunit PIC complex mediates DNA unwinding and targets Pol II core to the transcription start site where the first phosphodiester bond forms. Pol III complex consists of a ten-subunit catalytic core composed of POLR3A/RPC1, POLR3B/RPC2, POLR1C/RPAC1, POLR1D/RPAC2, POLR3K/RPC10, POLR2E/RPABC1, POLR2F/RPABC2, POLR2H/RPABC3, POLR2K/RPABC4 and POLR2L/RPABC5; a mobile stalk composed of two subunits POLR3H/RPC8 and CRCP/RPC9, protruding from the core and functioning primarily in transcription initiation; and additional subunits homologous to general transcription factors of the RNA polymerase II machinery, POLR3C/RPC3-POLR3F/RPC6-POLR3G/RPC7 heterotrimer required for transcription initiation and POLR3D/RPC4-POLR3E/RPC5 heterodimer involved in both transcription initiation and termination.

It is found in the nucleus. The protein localises to the nucleolus. Its function is as follows. DNA-dependent RNA polymerase catalyzes the transcription of DNA into RNA using the four ribonucleoside triphosphates as substrates. Common component of RNA polymerases I, II, and III which synthesize ribosomal RNA precursors, mRNA precursors and many functional non-coding RNAs, and small RNAs, such as 5S rRNA and tRNAs, respectively. Pol II is the central component of the basal RNA polymerase II transcription machinery. Pols are composed of mobile elements that move relative to each other. In Pol II, POLR2F/RPABC2 is part of the clamp element and together with parts of POLR2A/RPB1 and POLR2B/RPB2 forms a pocket to which the POLR2D/RPB4-POLR2G/RPB7 subcomplex binds. The protein is DNA-directed RNA polymerases I, II, and III subunit RPABC2 (POLR2F) of Bos taurus (Bovine).